A 327-amino-acid chain; its full sequence is Gamma-resorcylate decarboxylase (327 aa).

Zn(2+)-binding residues include Glu8, His10, His164, and Asp287. Asp287 is a catalytic residue.

This sequence belongs to the metallo-dependent hydrolases superfamily. ACMSD family. Homotetramer. Zn(2+) is required as a cofactor.

It carries out the reaction 2,6-dihydroxybenzoate + H(+) = resorcinol + CO2. It catalyses the reaction 2,3-dihydroxybenzoate + H(+) = catechol + CO2. It functions in the pathway aromatic compound metabolism. Its activity is regulated as follows. Insensitive to oxygen. Decarboxylation and carboxylation are inhibited by AgNO(3) and by diethyl pyrocarbonate, a histidine residue-specific inhibitor. Decarboxylation is also inhibited by HgCl(2) and activated by MgCl(2). Its function is as follows. Involved in the gamma-resorcylate (2,6-dihydroxybenzoate) catabolism. Catalyzes the reversible decarboxylation of gamma-resorcylate to resorcinol. Also catalyzes the decarboxylation of 2,3-dihydroxybenzoate to catechol, but does not act on 2-hydroxybenzoic acid 3-hydroxybenzoic acid, 4-hydroxybenzoic acid, 3,4-dihydroxybenzoic acid, 2,5-dihydroxybenzoic acid, 2,3,4-trihydroxybenzoic acid, 3,4,5-trihydroxybenzoic acid, 4-aminobenzoic acid, o-hydroxyphenylacetic acid and vanillic acid. Resorcinol and catechol can both be carboxylated by the reverse reaction. This Rhizobium radiobacter (Agrobacterium tumefaciens) protein is Gamma-resorcylate decarboxylase.